A 354-amino-acid chain; its full sequence is Protein CbrA (354 aa).

This sequence belongs to the CbrA family.

The polypeptide is Protein CbrA (cbrA) (Escherichia coli (strain K12)).